A 1271-amino-acid chain; its full sequence is MTEDNAEGQETALSSQNLVSVEITLPKDVSGASKPLTVKMAESDTISDLTSTLGLLSSMRDLTNYYVFYRNTNISETFDELCPISEVISALRVESQPNVKLELRHKPYTLAAVYEHLNKFREVIGLHFIDRRAFELGELSGVGKFDQLQLSQVPDQKEDEKEKVDLGEDDKASISSICDRILDETKLDLSEYGKFYDIYSDLQVPIKSLTISQWSPVSPKEAVRGDLLYLTLQTLENDTYHITCHLSGFFVNSCSTVNFNPARKPSHEPKFLFFDLVSSLSPAFAKTIARNEEILANSSRYAESYLIPSHTSGSYPWLVDTSAISRKPDQSRPQLSILNNGVDGSDNVKDWNEDFQAIRELPSGTVNERILRERLAIKLVSEFTKQATETAVNIIKGNLTPMNPNESVEQHIYMRNGIFYSSGVNATGAFDETGGNEAARYAAAKDLAGVKLLNRIDAKGIYHLATCVVDYMGRRIVCQAPVPGILNDPIVESDEAPADKVCYGLSTDGTKVYSDSQFHEALKPIAEAFHMKPHKVTLPNGFKTKEDIALSKDSKGIRGTDGRNYVIDLYRSTPLDIDFIEKHWRPEHSDSYPHRETVLRHEAVEEWWRRRALAIFKSETERLEAEQGAKKNEGESEKPQILLDAQKVSFNPDAFTHDEVDEEDKEVVREMSLFVTKQLIEEFVEESKKQLCPFDGSHLSSLLHKAGINLRYLGLIATRAQESLEAFEQEEKSKIEDNEKAIEEEKKEEKTEKKEEKEEKADEEKSENEEDKTKPEEPSKGVFDPIKANLNSVRLLAIQEMIARAVKHIFRSFAHTLSSYLLPYFVAHFHNCLLGSQVSSKPEISIDETLTAFADPDALRFITLDHQQVVSMVEEEVLLRFRFELPENWINAVSPITMMREISHKFGIQWKTQGYAFTAEGFKEFQQSTENIIVHKQKSSKKSKKRSSPSVEEVFKRKTIFVADDIISFTPSVKSSSYKATLLDEIFEAARGKIAAEEKDSGVTLLNELVSIYEQIYGVVHPETSNFYSVLSQFYSDLGFTTEASEVARKACVLFERTAGFDSFETISSYINSAYFEAANSSYVNAFKLYEKALGDWDFVFGSHHPSSVTTLTNLAEILAQLKITDKANRLFSAALELSEKINGEDSQITAMIHYRFAGTLVNENRFDEALGHFEKAHTTFSRHIDPNDRLTKDCSNYVANLKTYIAYMKQQAKDKNKPKKVKAPPVPPQATTKKSKNKSKMAQTQISKLHLNSSTRFSSSSRVKPRLKKK.

TPR repeat units follow at residues 104–138 and 502–535; these read RHKP…ELGE and CYGL…KPHK. One can recognise a Clu domain in the interval 329–580; that stretch reads DQSRPQLSIL…RSTPLDIDFI (252 aa). Residues 729–763 show a composition bias toward basic and acidic residues; it reads QEEKSKIEDNEKAIEEEKKEEKTEKKEEKEEKADE. Residues 729-783 form a disordered region; it reads QEEKSKIEDNEKAIEEEKKEEKTEKKEEKEEKADEEKSENEEDKTKPEEPSKGVF. 3 TPR repeats span residues 1067-1100, 1109-1142, and 1151-1184; these read ISSY…WDFV, VTTL…SEKI, and AMIH…FSRH. The tract at residues 1212–1271 is disordered; that stretch reads QAKDKNKPKKVKAPPVPPQATTKKSKNKSKMAQTQISKLHLNSSTRFSSSSRVKPRLKKK. Polar residues predominate over residues 1241-1253; sequence KMAQTQISKLHLN. Residues 1254–1263 are compositionally biased toward low complexity; that stretch reads SSTRFSSSSR.

Belongs to the CLU family. In terms of assembly, may associate with the eukaryotic translation initiation factor 3 (eIF-3) complex.

It localises to the cytoplasm. Its function is as follows. mRNA-binding protein involved in proper cytoplasmic distribution of mitochondria. The chain is Clustered mitochondria protein homolog from Meyerozyma guilliermondii (strain ATCC 6260 / CBS 566 / DSM 6381 / JCM 1539 / NBRC 10279 / NRRL Y-324) (Yeast).